The sequence spans 306 residues: Formimidoylglutamase (306 aa).

Over residues 1-13 the composition is skewed to polar residues; it reads MFQNATDWTPTST. The interval 1–36 is disordered; the sequence is MFQNATDWTPTSTDPRDEQFGGVVEPVPTPSDADDY. Positions 123, 147, 149, 151, 234, and 236 each coordinate Mn(2+).

This sequence belongs to the arginase family. Requires Mn(2+) as cofactor.

It catalyses the reaction N-formimidoyl-L-glutamate + H2O = formamide + L-glutamate. It participates in amino-acid degradation; L-histidine degradation into L-glutamate; L-glutamate from N-formimidoyl-L-glutamate (hydrolase route): step 1/1. Catalyzes the conversion of N-formimidoyl-L-glutamate to L-glutamate and formamide. The polypeptide is Formimidoylglutamase (Halobacterium salinarum (strain ATCC 29341 / DSM 671 / R1)).